The sequence spans 161 residues: Dihydrofolate reductase type 1 from Tn4003 (161 aa).

The 156-residue stretch at 2–157 folds into the DHFR domain; that stretch reads TLSIIVAHDK…IPHTFLHLVR (156 aa). 6–8 serves as a coordination point for substrate; the sequence is IVA. Residues 7–8 and 15–20 each bind NADP(+); these read VA and IGYQNQ. Position 28 (D28) interacts with substrate. An NADP(+)-binding site is contributed by 44–47; the sequence is ARKT. R58 is a substrate binding site. NADP(+) is bound by residues 63–66 and 93–98; these read LTNQ and FGGQTL. T112 is a binding site for substrate.

The protein belongs to the dihydrofolate reductase family.

It catalyses the reaction (6S)-5,6,7,8-tetrahydrofolate + NADP(+) = 7,8-dihydrofolate + NADPH + H(+). Its pathway is cofactor biosynthesis; tetrahydrofolate biosynthesis; 5,6,7,8-tetrahydrofolate from 7,8-dihydrofolate: step 1/1. In terms of biological role, key enzyme in folate metabolism. Catalyzes an essential reaction for de novo glycine and purine synthesis, and for DNA precursor synthesis. The polypeptide is Dihydrofolate reductase type 1 from Tn4003 (dfrA) (Staphylococcus aureus).